Reading from the N-terminus, the 251-residue chain is Probable transcriptional regulatory protein MAB_2888c (251 aa).

Residues 1–20 (MSGHSKWATTKHQKAVKDAR) are disordered.

This sequence belongs to the TACO1 family.

It is found in the cytoplasm. This is Probable transcriptional regulatory protein MAB_2888c from Mycobacteroides abscessus (strain ATCC 19977 / DSM 44196 / CCUG 20993 / CIP 104536 / JCM 13569 / NCTC 13031 / TMC 1543 / L948) (Mycobacterium abscessus).